The primary structure comprises 450 residues: MSLYAPIAAIATAPGRGGIGVVRISGPDLAELAQRLFGRPLTPRHAHYLPFRAADGEVIDEGLAIYFRAPHSYTGEDVLELQGHGGPAVLRRILARCLQAGHDLGLRPAEPGEFTRRAFLNERLDLAQAEAVADLIDASSEAAARGAMASLSGEFSQRVNDLSDRIIHLRMLVEATLDFPEEEIDFLEKYQARPTLQALTHDLDTLIAQARQGVILREGLHVVLAGKPNVGKSSLLNALAGDDIAIVTPIAGTTRDKVVQEIHIDGVPLHIVDTAGLRDTDDAVESIGIERTWKEIERADLILHLQDVTQPPDHLDAQIVRRLPARTPVLNVFNKVDLLDAAFQGQPDSLAISARGGIGLDALRQRLLQLAGWNPGAESPWLARERHLHALQQAAQHLEIATEHAREDDRVLDLFAEELRLAHEALTGITGKFTSDDLLGEIFSSFCIGK.

Residues arginine 23, glutamate 80, and arginine 123 each contribute to the (6S)-5-formyl-5,6,7,8-tetrahydrofolate site. The TrmE-type G domain occupies 219–372 (GLHVVLAGKP…LRQRLLQLAG (154 aa)). Asparagine 229 contacts K(+). GTP contacts are provided by residues 229-234 (NVGKSS), 248-254 (TPIAGTT), 273-276 (DTAG), and 353-355 (SAR). Serine 233 contacts Mg(2+). Positions 248, 250, and 253 each coordinate K(+). Position 254 (threonine 254) interacts with Mg(2+). Lysine 450 is a (6S)-5-formyl-5,6,7,8-tetrahydrofolate binding site.

Belongs to the TRAFAC class TrmE-Era-EngA-EngB-Septin-like GTPase superfamily. TrmE GTPase family. In terms of assembly, homodimer. Heterotetramer of two MnmE and two MnmG subunits. K(+) serves as cofactor.

The protein localises to the cytoplasm. Its function is as follows. Exhibits a very high intrinsic GTPase hydrolysis rate. Involved in the addition of a carboxymethylaminomethyl (cmnm) group at the wobble position (U34) of certain tRNAs, forming tRNA-cmnm(5)s(2)U34. The polypeptide is tRNA modification GTPase MnmE (Bordetella parapertussis (strain 12822 / ATCC BAA-587 / NCTC 13253)).